The sequence spans 428 residues: Ribosomal RNA small subunit methyltransferase B (428 aa).

Residues 253-259 (CAAPGGK), D276, D302, and D321 contribute to the S-adenosyl-L-methionine site. C374 acts as the Nucleophile in catalysis.

It belongs to the class I-like SAM-binding methyltransferase superfamily. RsmB/NOP family.

Its subcellular location is the cytoplasm. It carries out the reaction cytidine(967) in 16S rRNA + S-adenosyl-L-methionine = 5-methylcytidine(967) in 16S rRNA + S-adenosyl-L-homocysteine + H(+). In terms of biological role, specifically methylates the cytosine at position 967 (m5C967) of 16S rRNA. This Citrobacter koseri (strain ATCC BAA-895 / CDC 4225-83 / SGSC4696) protein is Ribosomal RNA small subunit methyltransferase B.